The primary structure comprises 454 residues: MNIVILAAGMGKRMYSDLPKVLHPVAGRPMLAHVLDTARALSPSRLVVVVGHGAARVREAVAADDVAFAEQAQQLGTGHAVMQALPLLDDNQPTLVLYGDVPLTSAATLQALVAEAGAQRFGVLTVEMPDPTGYGRIVRDAAGSIVRIVEQKDATEAEKAIREINTGIIVCPTGHLRKWLSTLRNDNAQGEYYLTDTVERAVADGVETVSAQPAAVWETLGVNSKLQLAEVERIHQGNQARRLLEAGVTLLDPARIDVRGELTCGRDVTIDVGCVFEGRVHLEDGVRIGAHCVIRNSTVGAGAQVHPFCHIDEAKVGPAGRIGPYARLRPGTELGEDVHIGNFVEVKNAQVAAHSKANHLAYVGDATVGSRVNIGAGTITCNYDGVNKHRTVIEDDVFIGSDTQLVAPVTVRRGATLGAGTTLTKEAPADKLTLSRAKQLTIDAWQRPVKQPKQ.

The interval 1 to 225 (MNIVILAAGM…VWETLGVNSK (225 aa)) is pyrophosphorylase. Residues 6–9 (LAAG), Lys20, Gln71, 76–77 (GT), 98–100 (YGD), Gly135, Glu150, Asn165, and Asn223 contribute to the UDP-N-acetyl-alpha-D-glucosamine site. Asp100 serves as a coordination point for Mg(2+). Asn223 is a binding site for Mg(2+). The interval 226 to 246 (LQLAEVERIHQGNQARRLLEA) is linker. The N-acetyltransferase stretch occupies residues 247-454 (GVTLLDPARI…WQRPVKQPKQ (208 aa)). Positions 329 and 347 each coordinate UDP-N-acetyl-alpha-D-glucosamine. The active-site Proton acceptor is the His359. Positions 362 and 373 each coordinate UDP-N-acetyl-alpha-D-glucosamine. Residues Ala376, 382 to 383 (NY), Ser401, Ala419, and Arg436 contribute to the acetyl-CoA site.

In the N-terminal section; belongs to the N-acetylglucosamine-1-phosphate uridyltransferase family. The protein in the C-terminal section; belongs to the transferase hexapeptide repeat family. As to quaternary structure, homotrimer. Mg(2+) is required as a cofactor.

The protein resides in the cytoplasm. The catalysed reaction is alpha-D-glucosamine 1-phosphate + acetyl-CoA = N-acetyl-alpha-D-glucosamine 1-phosphate + CoA + H(+). It catalyses the reaction N-acetyl-alpha-D-glucosamine 1-phosphate + UTP + H(+) = UDP-N-acetyl-alpha-D-glucosamine + diphosphate. It participates in nucleotide-sugar biosynthesis; UDP-N-acetyl-alpha-D-glucosamine biosynthesis; N-acetyl-alpha-D-glucosamine 1-phosphate from alpha-D-glucosamine 6-phosphate (route II): step 2/2. The protein operates within nucleotide-sugar biosynthesis; UDP-N-acetyl-alpha-D-glucosamine biosynthesis; UDP-N-acetyl-alpha-D-glucosamine from N-acetyl-alpha-D-glucosamine 1-phosphate: step 1/1. It functions in the pathway bacterial outer membrane biogenesis; LPS lipid A biosynthesis. In terms of biological role, catalyzes the last two sequential reactions in the de novo biosynthetic pathway for UDP-N-acetylglucosamine (UDP-GlcNAc). The C-terminal domain catalyzes the transfer of acetyl group from acetyl coenzyme A to glucosamine-1-phosphate (GlcN-1-P) to produce N-acetylglucosamine-1-phosphate (GlcNAc-1-P), which is converted into UDP-GlcNAc by the transfer of uridine 5-monophosphate (from uridine 5-triphosphate), a reaction catalyzed by the N-terminal domain. The chain is Bifunctional protein GlmU from Cupriavidus taiwanensis (strain DSM 17343 / BCRC 17206 / CCUG 44338 / CIP 107171 / LMG 19424 / R1) (Ralstonia taiwanensis (strain LMG 19424)).